An 89-amino-acid polypeptide reads, in one-letter code: Small ribosomal subunit protein uS14 (89 aa).

Positions 32-51 (DYEGLQKLPKNSSPVRLHNR) are disordered.

This sequence belongs to the universal ribosomal protein uS14 family. Part of the 30S ribosomal subunit. Contacts proteins S3 and S10.

Functionally, binds 16S rRNA, required for the assembly of 30S particles and may also be responsible for determining the conformation of the 16S rRNA at the A site. The protein is Small ribosomal subunit protein uS14 of Christiangramia forsetii (strain DSM 17595 / CGMCC 1.15422 / KT0803) (Gramella forsetii).